A 95-amino-acid polypeptide reads, in one-letter code: Small ribosomal subunit protein uS19 (95 aa).

The protein belongs to the universal ribosomal protein uS19 family.

Functionally, protein S19 forms a complex with S13 that binds strongly to the 16S ribosomal RNA. The polypeptide is Small ribosomal subunit protein uS19 (Thermosipho melanesiensis (strain DSM 12029 / CIP 104789 / BI429)).